The following is a 342-amino-acid chain: S-adenosylmethionine:tRNA ribosyltransferase-isomerase (342 aa).

The protein belongs to the QueA family. In terms of assembly, monomer.

It is found in the cytoplasm. It catalyses the reaction 7-aminomethyl-7-carbaguanosine(34) in tRNA + S-adenosyl-L-methionine = epoxyqueuosine(34) in tRNA + adenine + L-methionine + 2 H(+). Its pathway is tRNA modification; tRNA-queuosine biosynthesis. Functionally, transfers and isomerizes the ribose moiety from AdoMet to the 7-aminomethyl group of 7-deazaguanine (preQ1-tRNA) to give epoxyqueuosine (oQ-tRNA). This is S-adenosylmethionine:tRNA ribosyltransferase-isomerase from Bacillus pumilus (strain SAFR-032).